Here is a 789-residue protein sequence, read N- to C-terminus: Ribosomal protein S6 kinase alpha-5 (789 aa).

The region spanning 39–308 (FELLKVLGTG…ADEIKQHPFF (270 aa)) is the Protein kinase 1 domain. Residues 45-53 (LGTGAYGKV) and Lys71 contribute to the ATP site. Asp167 functions as the Proton acceptor in the catalytic mechanism. Ser202 is subject to Phosphoserine; by autocatalysis. The AGC-kinase C-terminal domain maps to 309 to 377 (QNINWDDLAA…VAPSILFKRN (69 aa)). Ser350 is subject to Phosphoserine. 2 positions are modified to phosphoserine; by autocatalysis: Ser366 and Ser371. Residues 416-677 (DLKEKPLGEG…MSSLRYNEWL (262 aa)) enclose the Protein kinase 2 domain. Residues 422–430 (LGEGSFSIC) and Lys445 each bind ATP. Asp534 functions as the Proton acceptor in the catalytic mechanism. 2 positions are modified to phosphothreonine: Thr571 and Thr690. A disordered region spans residues 731–789 (AKRRKMKKTSTSTETRSSSSESSHSSSSHSHGKTTPTKTLQPTNPTDSNNPETIFQFSD). Over residues 739-769 (TSTSTETRSSSSESSHSSSSHSHGKTTPTKT) the composition is skewed to low complexity. Residues Ser740, Ser742, and Ser748 each carry the phosphoserine; by autocatalysis modification. Over residues 770-789 (LQPTNPTDSNNPETIFQFSD) the composition is skewed to polar residues.

It belongs to the protein kinase superfamily. AGC Ser/Thr protein kinase family. S6 kinase subfamily. The cofactor is Mg(2+). In terms of processing, ser-366 and Thr-571 phosphorylation is required for kinase activity. Ser-366 and Ser-202 are autophosphorylated by the C-terminal kinase domain, and their phosphorylation is essential for the catalytic activity of the N-terminal kinase domain. Phosphorylated at Ser-350, Thr-571 and Thr-690 by MAP kinases. Autophosphorylated at Ser-740, Ser-742 and Ser-748 by the N-terminal kinase domain. As to expression, widely expressed with high levels in heart, brain and placenta. Less abundant in lung, kidney and liver.

The protein resides in the nucleus. The enzyme catalyses L-seryl-[protein] + ATP = O-phospho-L-seryl-[protein] + ADP + H(+). It carries out the reaction L-threonyl-[protein] + ATP = O-phospho-L-threonyl-[protein] + ADP + H(+). Its activity is regulated as follows. Activated by phosphorylation at Ser-350, Thr-571 and Thr-690 by MAP kinases, and by further autophosphorylation of Ser-202, Ser-366 and Ser-371 by the activated C-terminal kinase domain. The active N-terminal kinase domain finally phosphorylates downstream substrates, as well as Ser-740, Ser-742 and Ser-748 in its own C-terminal region. Its function is as follows. Serine/threonine-protein kinase that is required for the mitogen or stress-induced phosphorylation of the transcription factors CREB1 and ATF1 and that contributes to gene activation by histone phosphorylation. Phosphorylates CREB1 and ATF1 in response to mitogenic or stress stimuli such as UV-C irradiation, epidermal growth factor (EGF) and anisomycin. Directly represses transcription via phosphorylation of 'Ser-1' of histone H2A. Phosphorylates 'Ser-10' of histone H3 in response to mitogenics, stress stimuli and EGF, which results in the transcriptional activation of several immediate early genes, including proto-oncogenes c-fos/FOS and c-jun/JUN. May also phosphorylate 'Ser-28' of histone H3. Mediates the mitogen- and stress-induced phosphorylation of high mobility group protein 1 (HMGN1/HMG14). The polypeptide is Ribosomal protein S6 kinase alpha-5 (RPS6KA5) (Gallus gallus (Chicken)).